Here is a 1060-residue protein sequence, read N- to C-terminus: Probable serine/threonine-protein kinase MARK-A (1060 aa).

Basic and acidic residues-rich tracts occupy residues 1 to 11 (METLKEEEQFR) and 23 to 37 (HLKE…EREQ). 2 disordered regions span residues 1-52 (METL…LQLQ) and 67-88 (NKIP…SISV). 2 stretches are compositionally biased toward low complexity: residues 38 to 52 (QQQQ…LQLQ) and 68 to 88 (KIPS…SISV). In terms of domain architecture, Protein kinase spans 109-361 (YLVIKTIGRG…MEEIINHPWL (253 aa)). Residues 115-123 (IGRGQFGKV) and Lys-139 contribute to the ATP site. Asp-232 (proton acceptor) is an active-site residue. Residues 409 to 475 (INNINNTMAT…TTTTNATTTT (67 aa)) show a composition bias toward low complexity. 4 disordered regions span residues 409–488 (INNI…NNEE), 560–701 (GENS…SPLC), 714–886 (LREK…PVHS), and 899–966 (DDKS…QEPR). Positions 488 to 528 (ELDQEIIEELVGLGFEREELCNSIRQNKYNDAASTYFLLQG) constitute a UBA domain. Polar residues predominate over residues 577 to 594 (TVDSPKSTNTPQYRSSNT). Composition is skewed to low complexity over residues 603 to 613 (QQQQQQQQQQQ), 620 to 637 (QQQN…NNHN), 650 to 699 (STTV…NPSP), and 720 to 760 (TTTN…TSPN). Positions 761–770 (LQPFSLASTA) are enriched in polar residues. 2 stretches are compositionally biased toward low complexity: residues 771–799 (NNNN…SLNS) and 811–831 (QQQQ…NSSS). Basic and acidic residues predominate over residues 837 to 846 (QRQESRKLED). Composition is skewed to low complexity over residues 904–926 (NSSS…TNNT) and 935–965 (QNSN…QQEP). Positions 1008 to 1057 (IECETEGVRFSIEICRLPRLSVNGLKFKRIGGSSWRYKSICKDLLSQMKL) constitute a KA1 domain.

It belongs to the protein kinase superfamily. CAMK Ser/Thr protein kinase family. SNF1 subfamily.

It catalyses the reaction L-seryl-[protein] + ATP = O-phospho-L-seryl-[protein] + ADP + H(+). The enzyme catalyses L-threonyl-[protein] + ATP = O-phospho-L-threonyl-[protein] + ADP + H(+). This Dictyostelium discoideum (Social amoeba) protein is Probable serine/threonine-protein kinase MARK-A (mrkA).